The sequence spans 432 residues: Putative transferase At1g60990, chloroplastic (432 aa).

Residues 1–57 (MNLLQSCKDMAMMMRIDSVSHITNTALLPCLYNGTVLRRRSLSLRKCGFRERKFQLR) constitute a chloroplast transit peptide.

It belongs to the GcvT family. In terms of tissue distribution, expressed in young leaves (at protein level).

The protein resides in the plastid. Its subcellular location is the chloroplast. Functionally, folate-dependent protein involved in Fe/S cluster biogenesis. Functionally complements an E.coli mutant defective in ygfZ. The polypeptide is Putative transferase At1g60990, chloroplastic (Arabidopsis thaliana (Mouse-ear cress)).